The chain runs to 178 residues: ATP-dependent protease subunit HslV (178 aa).

The active site involves Thr7. Na(+) is bound by residues Gly162, Cys165, and Thr168.

It belongs to the peptidase T1B family. HslV subfamily. A double ring-shaped homohexamer of HslV is capped on each side by a ring-shaped HslU homohexamer. The assembly of the HslU/HslV complex is dependent on binding of ATP.

It is found in the cytoplasm. The catalysed reaction is ATP-dependent cleavage of peptide bonds with broad specificity.. With respect to regulation, allosterically activated by HslU binding. In terms of biological role, protease subunit of a proteasome-like degradation complex believed to be a general protein degrading machinery. The polypeptide is ATP-dependent protease subunit HslV (Burkholderia multivorans (strain ATCC 17616 / 249)).